The primary structure comprises 1126 residues: Carbamoyl phosphate synthase large chain (1126 aa).

The segment at 1–402 (MPKRTDIKSV…SLGKAMRSID (402 aa)) is carboxyphosphate synthetic domain. Arg129, Arg169, Gly175, Gly176, Glu208, Ile210, Glu215, Gly241, Val242, His243, Gln285, and Glu299 together coordinate ATP. In terms of domain architecture, ATP-grasp 1 spans 133-328 (KKVVEEAGAE…IAKIATKLAL (196 aa)). Residues Gln285, Glu299, and Asn301 each contribute to the Mg(2+) site. Mn(2+)-binding residues include Gln285, Glu299, and Asn301. The interval 403-551 (KRHMGFNWDG…YYYSCYADET (149 aa)) is oligomerization domain. The interval 552-962 (ELRPRDREAV…AFAKSQLAAY (411 aa)) is carbamoyl phosphate synthetic domain. One can recognise an ATP-grasp 2 domain in the interval 681–881 (GEVLKKADMN…LAKAAARIMV (201 aa)). 10 residues coordinate ATP: Arg717, Lys765, Leu767, Glu772, Gly797, Val798, His799, Ser800, Gln840, and Glu852. Positions 840, 852, and 854 each coordinate Mg(2+). Residues Gln840, Glu852, and Asn854 each coordinate Mn(2+). The segment at 963-1126 (EGGLPTSGNV…TQLFELESRD (164 aa)) is allosteric domain. Positions 964 to 1126 (GGLPTSGNVF…TQLFELESRD (163 aa)) constitute an MGS-like domain.

Belongs to the CarB family. As to quaternary structure, composed of two chains; the small (or glutamine) chain promotes the hydrolysis of glutamine to ammonia, which is used by the large (or ammonia) chain to synthesize carbamoyl phosphate. Tetramer of heterodimers (alpha,beta)4. It depends on Mg(2+) as a cofactor. Mn(2+) is required as a cofactor.

It catalyses the reaction hydrogencarbonate + L-glutamine + 2 ATP + H2O = carbamoyl phosphate + L-glutamate + 2 ADP + phosphate + 2 H(+). The enzyme catalyses hydrogencarbonate + NH4(+) + 2 ATP = carbamoyl phosphate + 2 ADP + phosphate + 2 H(+). The protein operates within amino-acid biosynthesis; L-arginine biosynthesis; carbamoyl phosphate from bicarbonate: step 1/1. Its pathway is pyrimidine metabolism; UMP biosynthesis via de novo pathway; (S)-dihydroorotate from bicarbonate: step 1/3. Its function is as follows. Large subunit of the glutamine-dependent carbamoyl phosphate synthetase (CPSase). CPSase catalyzes the formation of carbamoyl phosphate from the ammonia moiety of glutamine, carbonate, and phosphate donated by ATP, constituting the first step of 2 biosynthetic pathways, one leading to arginine and/or urea and the other to pyrimidine nucleotides. The large subunit (synthetase) binds the substrates ammonia (free or transferred from glutamine from the small subunit), hydrogencarbonate and ATP and carries out an ATP-coupled ligase reaction, activating hydrogencarbonate by forming carboxy phosphate which reacts with ammonia to form carbamoyl phosphate. This Bifidobacterium adolescentis (strain ATCC 15703 / DSM 20083 / NCTC 11814 / E194a) protein is Carbamoyl phosphate synthase large chain.